The chain runs to 525 residues: Bifunctional purine biosynthesis protein PurH (525 aa).

One can recognise an MGS-like domain in the interval 1-148 (MPSNNLIKNA…KNYKNVIVIV (148 aa)).

The protein belongs to the PurH family.

It carries out the reaction (6R)-10-formyltetrahydrofolate + 5-amino-1-(5-phospho-beta-D-ribosyl)imidazole-4-carboxamide = 5-formamido-1-(5-phospho-D-ribosyl)imidazole-4-carboxamide + (6S)-5,6,7,8-tetrahydrofolate. It catalyses the reaction IMP + H2O = 5-formamido-1-(5-phospho-D-ribosyl)imidazole-4-carboxamide. Its pathway is purine metabolism; IMP biosynthesis via de novo pathway; 5-formamido-1-(5-phospho-D-ribosyl)imidazole-4-carboxamide from 5-amino-1-(5-phospho-D-ribosyl)imidazole-4-carboxamide (10-formyl THF route): step 1/1. The protein operates within purine metabolism; IMP biosynthesis via de novo pathway; IMP from 5-formamido-1-(5-phospho-D-ribosyl)imidazole-4-carboxamide: step 1/1. This Buchnera aphidicola subsp. Acyrthosiphon pisum (strain APS) (Acyrthosiphon pisum symbiotic bacterium) protein is Bifunctional purine biosynthesis protein PurH.